Consider the following 339-residue polypeptide: 4-dimethylallyltryptophan N-methyltransferase easF (339 aa).

This sequence belongs to the methyltransferase superfamily. In terms of assembly, homodimer.

It catalyses the reaction 4-(3-methylbut-2-enyl)-L-tryptophan + S-adenosyl-L-methionine = 4-(3-methylbut-2-enyl)-L-abrine + S-adenosyl-L-homocysteine + H(+). The protein operates within alkaloid biosynthesis; ergot alkaloid biosynthesis. 4-dimethylallyltryptophan N-methyltransferase; part of the gene cluster that mediates the biosynthesis of fumiclavanine C, a fungal ergot alkaloid. DmaW catalyzes the first step of ergot alkaloid biosynthesis by condensing dimethylallyl diphosphate (DMAP) and tryptophan to form 4-dimethylallyl-L-tryptophan. The second step is catalyzed by the methyltransferase easF that methylates 4-dimethylallyl-L-tryptophan in the presence of S-adenosyl-L-methionine, resulting in the formation of 4-dimethylallyl-L-abrine. The catalase easC and the FAD-dependent oxidoreductase easE then transform 4-dimethylallyl-L-abrine to chanoclavine-I which is further oxidized by EasD in the presence of NAD(+), resulting in the formation of chanoclavine-I aldehyde. EasA reduces chanoclavine-I aldehyde to dihydrochanoclavine-I aldehyde that spontaneously dehydrates to form 6,8-dimethyl-6,7-didehydroergoline. EasG then catalyzes the reduction of 6,8-dimethyl-6,7-didehydroergoline to form festuclavine. Hydrolysis of festuclavine by easM then leads to the formation of fumigaclavine B which is in turn acetylated by easN to fumigaclavine A. Finally, easL catalyzes the conversion of fumigaclavine A into fumigaclavine C by attaching a dimethylallyl moiety to C-2 of the indole nucleus. The polypeptide is 4-dimethylallyltryptophan N-methyltransferase easF (Aspergillus fumigatus (strain ATCC MYA-4609 / CBS 101355 / FGSC A1100 / Af293) (Neosartorya fumigata)).